Here is a 419-residue protein sequence, read N- to C-terminus: Creatine kinase S-type, mitochondrial (419 aa).

The transit peptide at 1–39 directs the protein to the mitochondrion; sequence MAGTFGRLLAGRVTAALFAAAGSGVLTTGYLLNQQNVKA. The Phosphagen kinase N-terminal domain maps to 46-132; it reads KLFPPSADYP…FDPVIKARHN (87 aa). The region spanning 159–401 is the Phosphagen kinase C-terminal domain; that stretch reads YVLSSRVRTG…NYLVDCEKKL (243 aa). Residues 162–166, His-225, Arg-270, Arg-326, 354–359, and Asp-369 contribute to the ATP site; these read SSRVR and RGTGGV.

It belongs to the ATP:guanido phosphotransferase family. As to quaternary structure, exists as an octamer composed of four MTCK homodimers. In terms of tissue distribution, expressed in the leg muscle and heart.

The protein resides in the mitochondrion inner membrane. The catalysed reaction is creatine + ATP = N-phosphocreatine + ADP + H(+). Reversibly catalyzes the transfer of phosphate between ATP and various phosphogens (e.g. creatine phosphate). Creatine kinase isoenzymes play a central role in energy transduction in tissues with large, fluctuating energy demands, such as skeletal muscle, heart, brain and spermatozoa. The polypeptide is Creatine kinase S-type, mitochondrial (CKMT2) (Gallus gallus (Chicken)).